Consider the following 164-residue polypeptide: Phosphopantetheine adenylyltransferase (164 aa).

S9 provides a ligand contact to substrate. ATP contacts are provided by residues 9 to 10 (SF) and H17. Positions 41, 78, and 92 each coordinate substrate. ATP is bound by residues 93–95 (GLR), E103, and 128–134 (SRPITAT).

The protein belongs to the bacterial CoaD family. In terms of assembly, homohexamer. The cofactor is Mg(2+).

Its subcellular location is the cytoplasm. It carries out the reaction (R)-4'-phosphopantetheine + ATP + H(+) = 3'-dephospho-CoA + diphosphate. The protein operates within cofactor biosynthesis; coenzyme A biosynthesis; CoA from (R)-pantothenate: step 4/5. Reversibly transfers an adenylyl group from ATP to 4'-phosphopantetheine, yielding dephospho-CoA (dPCoA) and pyrophosphate. The sequence is that of Phosphopantetheine adenylyltransferase from Sinorhizobium fredii (strain NBRC 101917 / NGR234).